A 432-amino-acid polypeptide reads, in one-letter code: Adhesin YadA (432 aa).

Positions 1–25 (MTKDFKISVSAALISALFSSPYAFA) are cleaved as a signal peptide. The segment at 26–340 (EEPEDGNDGI…KKAISESNQY (315 aa)) is surface exposed passenger domain. Residues 242-263 (VNVAQLKKEMAETLENARKETL) are a coiled coil. The outer membrane translocation of the passenger domain stretch occupies residues 341-379 (TDHKFSQLDNRLDKLDKRVDKGLASSAALNSLFQPYGVG). 4 beta stranded membrane-spanning segments follow: residues 379-389 (GKVNFTAGVGG), 393-404 (SQALAIGSGYRV), 411-417 (KAGVAYA), and 421-432 (NVMYNASFNIEW). Residues 380-432 (KVNFTAGVGGYRSSQALAIGSGYRVNESVALKAGVAYAGSSNVMYNASFNIEW) form a translocator domain region.

This sequence belongs to the autotransporter-2 (AT-2) (TC 1.B.40) family. As to quaternary structure, homotrimer.

It localises to the cell surface. The protein resides in the cell outer membrane. In terms of biological role, collagen-binding outer membrane protein forming a fibrillar matrix on the bacterial cell surface. Promotes attachment to eukaryotic cells and after invasion, is the major adhesin in infected tissue. Constitutes an alternative uptake pathway under conditions in which invasin synthesis is repressed. The protein is Adhesin YadA (yadA) of Yersinia pseudotuberculosis serotype I (strain IP32953).